A 288-amino-acid polypeptide reads, in one-letter code: Phenazine biosynthesis-like domain-containing protein (288 aa).

Residue glutamate 46 is part of the active site.

The protein belongs to the PhzF family. In terms of assembly, interacts with UNRIP/MAWD.

This chain is Phenazine biosynthesis-like domain-containing protein (PBLD), found in Bos taurus (Bovine).